Reading from the N-terminus, the 101-residue chain is Movement protein (101 aa).

The helical transmembrane segment at 30-50 (EVAILSFVALICIYLLYLWVL) threads the bilayer. The tract at residues 80–101 (PIPNTLEPTAPVHPGPFVPGQG) is disordered. Pro residues predominate over residues 90–101 (PVHPGPFVPGQG).

Belongs to the mastrevirus movement protein family. In terms of assembly, interacts with the capsid protein (CP). Part of a MP-CP-viral DNA complex.

It is found in the host membrane. Its function is as follows. Involved in the viral transport within, and between cells. This is Movement protein from Avena sativa (Oat).